We begin with the raw amino-acid sequence, 253 residues long: Sulfate transporter CysZ (253 aa).

The next 4 helical transmembrane spans lie at 31 to 51 (FVIL…WWLF), 75 to 95 (LLWP…FSTI), 151 to 171 (IVLL…PVLW), and 222 to 242 (IPLL…AMWV).

The protein belongs to the CysZ family.

It is found in the cell inner membrane. Its function is as follows. High affinity, high specificity proton-dependent sulfate transporter, which mediates sulfate uptake. Provides the sulfur source for the cysteine synthesis pathway. The chain is Sulfate transporter CysZ from Escherichia coli O8 (strain IAI1).